A 165-amino-acid chain; its full sequence is Dihydrofolate reductase type A13 (165 aa).

The DHFR domain maps to Arg7 to Arg162.

It belongs to the dihydrofolate reductase family. In terms of assembly, homodimer.

The enzyme catalyses (6S)-5,6,7,8-tetrahydrofolate + NADP(+) = 7,8-dihydrofolate + NADPH + H(+). It functions in the pathway cofactor biosynthesis; tetrahydrofolate biosynthesis; 5,6,7,8-tetrahydrofolate from 7,8-dihydrofolate: step 1/1. Key enzyme in folate metabolism. Catalyzes an essential reaction for de novo glycine and purine synthesis, and for DNA precursor synthesis. This Escherichia coli protein is Dihydrofolate reductase type A13 (dfrA13).